A 542-amino-acid chain; its full sequence is MRRSGNYQAPVWNNDFIQSFSTDKYKDEKFLKKKEELIAQVKVLLNTKMEAVKQLELIEDLRNLGLTYYFEDEFKKILTSIYNEHKGFKNEQVGDLYFTSLAFRLLRLHGFDVSEDVFNFFKNEDGSDFKASLGENTKDVLELYEASFLIRVGEVTLEQARVFSTKILEKKVEEGIKDEKLLAWIQHSLALPLHWRIQRLEARWFLDAYKARKDMNPIIYELGKIDFHIIQETQLQEVQEVSQWWTNTNLAEKLPFVRDRIVECYFWALGLFEPHEYGYQRKMAAIIITFVTIIDDVYDVYDTLDELQLFTDAIRKWDVESISTLPYYMQVCYLAVFTYASELAYDILKDQGFNSISYLQRSWLSLVEGFFQEAKWYYAGYTPTLAEYLENAKVSISSPTIISQVYFTLPNSTERTVVENVFGYHNILYLSGMILRLADDLGTTQFELKRGDVQKAIQCYMNDNNATEEEGTEHVKYLLREAWQEMNSAMADPDCPLSEDLVFAAANLGRTSQFIYLDGDGHGVQHSEIHNQMGGLIFEPYV.

Residues Asp295 and Asp299 each coordinate Mn(2+). The short motif at 295–299 (DDVYD) is the DDXXD motif element. Homodimerization stretches follow at residues 301 to 307 (YDTLDEL) and 373 to 410 (EAKW…FTLP). The Mn(2+) site is built by Asp439 and Glu447.

It belongs to the terpene synthase family. Homodimer. Requires Mn(2+) as cofactor. Mg(2+) is required as a cofactor. In terms of tissue distribution, mostly expressed in flowers and, to a lower extent, in leaves, especially in glandular trichomes.

The catalysed reaction is (2E)-geranyl diphosphate = gamma-terpinene + diphosphate. The enzyme catalyses (2E)-geranyl diphosphate = alpha-terpinene + diphosphate. It functions in the pathway secondary metabolite biosynthesis; terpenoid biosynthesis. Involved in the biosynthesis of phenolic monoterpenes natural products thymol and carvacrol which have a broad range of biological activities acting as antimicrobial compounds, insecticides, antioxidants and pharmaceutical agents. Monoterpene synthase which catalyzes the conversion of geranyl diphosphate (GPP) to gamma-terpinene and the minor products alpha-thujene, alpha-terpinene, myrcene, sabinene, (+)-R-limonene, alpha-pinene and alpha-phellandrene. This is Gamma-terpinene synthase 1 from Thymus vulgaris (Thyme).